A 432-amino-acid chain; its full sequence is Leucine-rich repeat-containing protein ODA7 (432 aa).

LRR repeat units follow at residues 47 to 68, 69 to 90, 91 to 112, 113 to 134, and 138 to 159; these read NLKALFLEGNVLETLEGLPPLA, DLKCLYVQQNCIWKISGLEAVP, GLDTLNISNNQLTKLEGLACCP, ALRTLIATHNHLVTLDSVAHLA, and ALQTLDLQNNELEDPGIVDILK. Positions 173 to 211 constitute an LRRCT domain; sequence PVVSNIKNYRKVLVTSIPSLTYLDDRPVFDNERKIAQAW. The stretch at 212-243 forms a coiled coil; that stretch reads LEGGLEGERAMRNQLKEEEEERSRKNHEFMMQ. Disordered regions lie at residues 297–332 and 368–432; these read RPGEEEPAELASARQGLARDGKPIQEGAWGSGAAAE and EELD…NDLD. 2 stretches are compositionally biased toward low complexity: residues 323-332 and 407-425; these read GAWGSGAAAE and VAAAKKGAASGAAEGISAA.

The protein belongs to the DNAAF1 family. As to quaternary structure, interacts with both outer row and I1 inner row dyneins.

It is found in the cytoplasm. The protein localises to the cytoskeleton. It localises to the cilium axoneme. Functionally, cilium-specific protein required for cilia structures. Axonemal dynein-associated protein that participates in a structural link between inner and outer row dyneins. The polypeptide is Leucine-rich repeat-containing protein ODA7 (ODA7) (Chlamydomonas reinhardtii (Chlamydomonas smithii)).